A 315-amino-acid chain; its full sequence is Lipoyl synthase (315 aa).

Residues Cys63, Cys68, Cys74, Cys89, Cys93, Cys96, and Ser303 each coordinate [4Fe-4S] cluster. One can recognise a Radical SAM core domain in the interval 75 to 292 (FSKGTATFMI…EEKAYEMGFV (218 aa)).

This sequence belongs to the radical SAM superfamily. Lipoyl synthase family. The cofactor is [4Fe-4S] cluster.

Its subcellular location is the cytoplasm. The enzyme catalyses [[Fe-S] cluster scaffold protein carrying a second [4Fe-4S](2+) cluster] + N(6)-octanoyl-L-lysyl-[protein] + 2 oxidized [2Fe-2S]-[ferredoxin] + 2 S-adenosyl-L-methionine + 4 H(+) = [[Fe-S] cluster scaffold protein] + N(6)-[(R)-dihydrolipoyl]-L-lysyl-[protein] + 4 Fe(3+) + 2 hydrogen sulfide + 2 5'-deoxyadenosine + 2 L-methionine + 2 reduced [2Fe-2S]-[ferredoxin]. It functions in the pathway protein modification; protein lipoylation via endogenous pathway; protein N(6)-(lipoyl)lysine from octanoyl-[acyl-carrier-protein]: step 2/2. In terms of biological role, catalyzes the radical-mediated insertion of two sulfur atoms into the C-6 and C-8 positions of the octanoyl moiety bound to the lipoyl domains of lipoate-dependent enzymes, thereby converting the octanoylated domains into lipoylated derivatives. The protein is Lipoyl synthase of Chromobacterium violaceum (strain ATCC 12472 / DSM 30191 / JCM 1249 / CCUG 213 / NBRC 12614 / NCIMB 9131 / NCTC 9757 / MK).